A 240-amino-acid polypeptide reads, in one-letter code: uncharacterized protein (240 aa).

Positions 26-52 (DYVDDGESLPTRQSVKNQREQKKKQGK) are disordered. Residues 57 to 77 (LFTVLAVIFVFVPVIVLVTLF) form a helical membrane-spanning segment. A disordered region spans residues 100–185 (KYEVVPKSED…QPAEPVQNVP (86 aa)). Over residues 103–159 (VVPKSEDKNDTADTKETALQKESKKEPEDSKPKEQTAADKKQTAVAEKEDSPNKEEA) the composition is skewed to basic and acidic residues. The segment covering 160–185 (TAAAASSSQSTVQQQEQPAEPVQNVP) has biased composition (low complexity). The LysM domain occupies 189–235 (VKHTVQKKETLYRISMKYYKSRTGEEKIRAYNHLNGNDVYTGQVLDI).

The protein resides in the membrane. This is an uncharacterized protein from Bacillus subtilis (strain 168).